We begin with the raw amino-acid sequence, 401 residues long: UDP-GlcNAc:betaGal beta-1,3-N-acetylglucosaminyltransferase 9 (401 aa).

At 1 to 10 the chain is on the cytoplasmic side; it reads MRRRLRLRRE. Residues 11–31 traverse the membrane as a helical; Signal-anchor for type II membrane protein segment; that stretch reads ALLTLLLGATLGLLLYAQQEG. The Lumenal portion of the chain corresponds to 32-401; sequence AAPTTSAPRA…VPAGPFQWGP (370 aa). The interval 33–85 is disordered; that stretch reads APTTSAPRAQGRAAPGPTPGLRVFQAPDTGAAPPAYEGDTPEPPTPTGPFDFG. Positions 38 to 47 are enriched in low complexity; the sequence is APRAQGRAAP.

This sequence belongs to the glycosyltransferase 31 family.

It is found in the golgi apparatus membrane. This is UDP-GlcNAc:betaGal beta-1,3-N-acetylglucosaminyltransferase 9 from Bos taurus (Bovine).